Here is a 640-residue protein sequence, read N- to C-terminus: WW domain-binding protein 11 (640 aa).

The span at 1–11 (MGRRSTSSTKS) shows a compositional bias: polar residues. The interval 1–37 (MGRRSTSSTKSGKFMNPTDQARKEARKRELKKNKKQR) is disordered. The span at 28 to 37 (RELKKNKKQR) shows a compositional bias: basic residues. Residues 75–122 (EKVLRDKRKKLRETFERIVRLYERENPETYKELRKLELEYETKRGQLS) are a coiled coil. Disordered stretches follow at residues 155-174 (DIPL…SALG), 187-563 (VPRL…ISAK), and 582-625 (RVRR…LKTK). Pro residues predominate over residues 194–207 (RKPPGPPPGPPPPQ). The segment covering 230 to 240 (DGGRDSDSKSE) has biased composition (basic and acidic residues). A compositionally biased stretch (acidic residues) spans 241-251 (ADEESDSQEDS). The span at 252–274 (SAEREDSDRGERDEERERADKHT) shows a compositional bias: basic and acidic residues. Residue serine 285 is modified to Phosphoserine. Acidic residues predominate over residues 315-338 (PEEEEEDEEEEYSESEDSEAEDQA). Residues 356 to 371 (APMAAQQPPSLMQAPP) show a composition bias toward low complexity. Composition is skewed to pro residues over residues 372–412 (ITGP…PPGL) and 422–491 (RLLP…PPLN). The PGR signature appears at 421 to 432 (PRLLPPGPPPGR). Positions 547 to 558 (GSGGASAQGGGA) are enriched in gly residues. The span at 586 to 599 (DRAGGTGRREEERP) shows a compositional bias: basic and acidic residues. The segment covering 603–616 (QQTPAHQAPPIAHA) has biased composition (low complexity).

It localises to the cytoplasm. The protein localises to the nucleus. Functionally, activates pre-mRNA splicing. In Danio rerio (Zebrafish), this protein is WW domain-binding protein 11 (wbp11).